Consider the following 212-residue polypeptide: Redox-sensing transcriptional repressor Rex (212 aa).

The H-T-H motif DNA-binding region spans 17–56; the sequence is KYHRYLQELMENDIDRISSKELSEKIGFTASQIRQDLNCF. 91–96 is a binding site for NAD(+); the sequence is GAGNIG.

This sequence belongs to the transcriptional regulatory Rex family. In terms of assembly, homodimer.

The protein resides in the cytoplasm. Its function is as follows. Modulates transcription in response to changes in cellular NADH/NAD(+) redox state. This Clostridium perfringens (strain SM101 / Type A) protein is Redox-sensing transcriptional repressor Rex.